The chain runs to 588 residues: Transcription factor tau 60 kDa subunit (588 aa).

The tract at residues 399–588 is sufficient for SPT15-binding; the sequence is LPKLPENFSM…VYCGTTLEVM (190 aa).

As to quaternary structure, heterodimer with TFC6. Component of the TFIIIC complex composed of TFC1, TFC3, TFC4, TFC6, TFC7 and TFC8. The subunits are organized in two globular domains, tauA and tauB, connected by a proteolysis-sensitive and flexible linker. Interacts with SPT15 and directly with TFC6.

Its subcellular location is the nucleus. Functionally, TFIIIC mediates tRNA and 5S RNA gene activation by binding to intragenic promoter elements. Upstream of the transcription start site, TFIIIC assembles the initiation complex TFIIIB-TFIIIC-tDNA, which is sufficient for RNA polymerase III recruitment and function. Part of the tauB domain of TFIIIC that binds boxB DNA promoter sites of tRNA and similar genes. Plays a role in TFIIB assembly through its interaction with SPT15/TBP. Essential for cell viability. The chain is Transcription factor tau 60 kDa subunit (TFC8) from Saccharomyces cerevisiae (strain ATCC 204508 / S288c) (Baker's yeast).